A 445-amino-acid chain; its full sequence is MSNRKYFGTDGIRGRVGDAPITPDFVLKLGWAAGKVLARHGSRKIIIGKDTRISGYMLESALEAGLAAAGLSALFTGPMPTPAVAYLTRTFRAEAGIVISASHNPFYDNGIKFFSIDGTKLPDAVEEAIEAEMEKEISCVDSAELGKASRIVDAAGRYIEFCKATFPNELSLSELKIVVDCANGATYHIAPNVLRELGANVIAIGCEPNGVNINAEVGATDVRALQARVLAEKADLGIAFDGDGDRVIMVDHEGNKVDGDQIMYIIAREGLRQGQLRGGAVGTLMSNMGLELALKQLGIPFARAKVGDRYVLEKMQEKGWRIGAENSGHVILLDKTTTGDGIVAGLQVLAAMARNHMSLHDLCSGMKMFPQILVNVRYTADSGDPLEHESVKAVTAEVEAALGSRGRVLLRKSGTEPLIRVMVEGEDEAQVTEFAHRIADAVKAV.

Serine 102 acts as the Phosphoserine intermediate in catalysis. Mg(2+)-binding residues include serine 102, aspartate 241, aspartate 243, and aspartate 245. Serine 102 is modified (phosphoserine).

It belongs to the phosphohexose mutase family. The cofactor is Mg(2+). In terms of processing, activated by phosphorylation.

The enzyme catalyses alpha-D-glucosamine 1-phosphate = D-glucosamine 6-phosphate. In terms of biological role, catalyzes the conversion of glucosamine-6-phosphate to glucosamine-1-phosphate. The chain is Phosphoglucosamine mutase from Escherichia coli O7:K1 (strain IAI39 / ExPEC).